Reading from the N-terminus, the 261-residue chain is Ribonuclease HII (261 aa).

In terms of domain architecture, RNase H type-2 spans 71–259 (QYIAGVDEVG…VKEAKLHFES (189 aa)). Residues D77, E78, and D169 each contribute to the a divalent metal cation site.

The protein belongs to the RNase HII family. Mn(2+) serves as cofactor. Requires Mg(2+) as cofactor.

It is found in the cytoplasm. It carries out the reaction Endonucleolytic cleavage to 5'-phosphomonoester.. Endonuclease that specifically degrades the RNA of RNA-DNA hybrids. This chain is Ribonuclease HII, found in Listeria innocua serovar 6a (strain ATCC BAA-680 / CLIP 11262).